The sequence spans 310 residues: Olfactory receptor 5W2 (310 aa).

At 1–25 (MDWENCSSLTDFFLLGITNNPEMKV) the chain is on the extracellular side. N-linked (GlcNAc...) asparagine glycosylation occurs at Asn-5. A helical transmembrane segment spans residues 26-46 (TLFAVFLAVYIINFSANLGMI). Residues 47-54 (VLIRMDYQ) lie on the Cytoplasmic side of the membrane. Residues 55–75 (LHTPMYFFLSHLSFCDLCYST) form a helical membrane-spanning segment. Topologically, residues 76-99 (ATGPKMLVDLLAKNKSIPFYGCAL) are extracellular. Residues 100–120 (QFLVFCIFADSECLLLSVMAF) form a helical membrane-spanning segment. Residues 121–139 (DRYKAIINPLLYTVNMSSR) are Cytoplasmic-facing. A helical transmembrane segment spans residues 140–160 (VCYLLLTGVYLVGIADALIHM). Residues 161–196 (TLAFRLCFCGSNEINHFFCDIPPLLLLSRSDTQVNE) are Extracellular-facing. The chain crosses the membrane as a helical span at residues 197-217 (LVLFTVFGFIELSTISGVFIS). Residues 218–237 (YCYIILSVLEIHSAEGRFKA) are Cytoplasmic-facing. The chain crosses the membrane as a helical span at residues 238–258 (LSTCTSHLSAVAIFQGTLLFM). Over 259–271 (YFRPSSSYSLDQD) the chain is Extracellular. The chain crosses the membrane as a helical span at residues 272 to 292 (KMTSLFYTLVVPMLNPLIYSL). The Cytoplasmic portion of the chain corresponds to 293–310 (RNKDVKEALKKLKNKILF).

It belongs to the G-protein coupled receptor 1 family.

Its subcellular location is the cell membrane. Odorant receptor. In Homo sapiens (Human), this protein is Olfactory receptor 5W2 (OR5W2).